The following is a 162-amino-acid chain: Lectin BRA-3 (162 aa).

Residues 1–24 form the signal peptide; the sequence is MQRSEIVQAVTLLVVVFAITTAEC. Residues 25–152 enclose the C-type lectin domain; sequence TCPGNLDWQE…NKNKNFLCKM (128 aa). 3 disulfide bridges follow: Cys26-Cys39, Cys56-Cys150, and Cys125-Cys142.

Homotetramer; disulfide-linked. As to expression, coelemic fluid.

In terms of biological role, sugar-binding protein which recognizes specific carbohydrate structures and agglutinates a variety of animal cells by binding to cell-surface glycoproteins and glycolipids. Calcium-dependent lectin. Invertebrate lectins may be involved in defense functions. The chain is Lectin BRA-3 from Megabalanus rosa (Acorn barnacle).